The chain runs to 121 residues: Small ribosomal subunit protein bS6 (121 aa).

It belongs to the bacterial ribosomal protein bS6 family.

Its function is as follows. Binds together with bS18 to 16S ribosomal RNA. In Rickettsia conorii (strain ATCC VR-613 / Malish 7), this protein is Small ribosomal subunit protein bS6.